The sequence spans 207 residues: MFKLLQIDSSPMGDASISRRLTQEYARNWLRAHPDGRVVERDLCRIAMPPIDAAWIAANFTPPDRRTAQQNEMLALSTTFTTELRDADEYVIGVPMHNWGPSAHFKLWLDHIVRQGETVETTPSGPRGLLGGRRATFVIAAGWRYGPDAERAQRNFLEPWLRTLFGFLGVEDMRFVMADGAADVFTGKADSAVFLAPHVDAVRALFA.

Residues Ser10 and 16-18 (SIS) each bind FMN.

The protein belongs to the azoreductase type 1 family. Homodimer. FMN is required as a cofactor.

It carries out the reaction 2 a quinone + NADH + H(+) = 2 a 1,4-benzosemiquinone + NAD(+). The enzyme catalyses N,N-dimethyl-1,4-phenylenediamine + anthranilate + 2 NAD(+) = 2-(4-dimethylaminophenyl)diazenylbenzoate + 2 NADH + 2 H(+). Its function is as follows. Quinone reductase that provides resistance to thiol-specific stress caused by electrophilic quinones. In terms of biological role, also exhibits azoreductase activity. Catalyzes the reductive cleavage of the azo bond in aromatic azo compounds to the corresponding amines. The polypeptide is FMN-dependent NADH:quinone oxidoreductase 3 (Burkholderia lata (strain ATCC 17760 / DSM 23089 / LMG 22485 / NCIMB 9086 / R18194 / 383)).